Here is a 533-residue protein sequence, read N- to C-terminus: MEIAKEKSGAKPEFIDNEDESLRESIVIFDFGSQYSLLIARRIREMHVYCELVSHDTPWEKIAHLNPRGFILSGGPSSVYEAGAPLAPAYIFESKLPVLGICYGMQAITHQLGGVVEHSEKREYGHALLHSSVANSDLLSDMPEPSPVWMSHGDRIEKMPAGFTALAYTENCPVAVMGNEADIYGLQFHPEVVHSPNGKIILKNFVFNICKCHANWTMGNYIQESIHNIREQVGDGQVICALSGGVDSAVVASLIHKAIGDQLTCIYVNNGLLRREEADRTLHVFKNHMGMKIIYVDAVDRFLDSLSGVTDPEQKRKVIGSEFIKVFEDEACKLGKIDFLAQGTLYPDVIESVSSVSKASAKIKSHHNVGGLPAHMKLKLIEPLRYLFKDEVRLLGKELGLPDEMIWRQPFPGPGLAIRIIGEVTREKLEILRAADWIVMSEIKKAKMYHQVWQSFAILTDVKSVGVMGDFRTYGYLVAIRAVTSEDAMTADWAKLPYDLLSVISNRIVNEVKEVNRVVYDISSKPPSTIEWE.

The region spanning 25-215 (SIVIFDFGSQ…VFNICKCHAN (191 aa)) is the Glutamine amidotransferase type-1 domain. Catalysis depends on cysteine 102, which acts as the Nucleophile. Catalysis depends on residues histidine 189 and glutamate 191. The GMPS ATP-PPase domain occupies 216–408 (WTMGNYIQES…LGLPDEMIWR (193 aa)). An ATP-binding site is contributed by 243–249 (SGGVDSA).

Homodimer.

The enzyme catalyses XMP + L-glutamine + ATP + H2O = GMP + L-glutamate + AMP + diphosphate + 2 H(+). It participates in purine metabolism; GMP biosynthesis; GMP from XMP (L-Gln route): step 1/1. Its function is as follows. Catalyzes the synthesis of GMP from XMP. This chain is GMP synthase [glutamine-hydrolyzing], found in Dehalococcoides mccartyi (strain ATCC BAA-2266 / KCTC 15142 / 195) (Dehalococcoides ethenogenes (strain 195)).